The chain runs to 235 residues: Bypass of stop codon protein 2 (235 aa).

Residues 68-88 form a helical membrane-spanning segment; sequence FGIFQLMCSLGVIVLLLPIII. At Ser177 the chain carries Phosphoserine.

It localises to the lipid droplet. The protein localises to the membrane. In Saccharomyces cerevisiae (strain ATCC 204508 / S288c) (Baker's yeast), this protein is Bypass of stop codon protein 2 (BSC2).